Reading from the N-terminus, the 83-residue chain is MPYSRDITKFITATEPEVGLPLLALQRSKSIIGVILLVISLLFIFIGIIILSVSSYTTTGSIFVVLSLILGGGGFFLIYKDNS.

2 consecutive transmembrane segments (helical) span residues 31–51 (IIGV…IIIL) and 59–79 (TGSI…FLIY).

The protein belongs to the asfivirus EP84R family.

Its subcellular location is the virion membrane. This is Transmembrane protein EP84R from Ornithodoros (relapsing fever ticks).